Here is a 386-residue protein sequence, read N- to C-terminus: Succinate--CoA ligase [ADP-forming] subunit beta (386 aa).

In terms of domain architecture, ATP-grasp spans 9 to 244 (KQILKRFGIS…YDEEIPEEIE (236 aa)). ATP is bound by residues K46, 53 to 55 (GRG), E99, C102, and E107. Residues N199 and D213 each coordinate Mg(2+). Substrate contacts are provided by residues N264 and 320–322 (GIM).

Belongs to the succinate/malate CoA ligase beta subunit family. Heterotetramer of two alpha and two beta subunits. Mg(2+) serves as cofactor.

The enzyme catalyses succinate + ATP + CoA = succinyl-CoA + ADP + phosphate. It carries out the reaction GTP + succinate + CoA = succinyl-CoA + GDP + phosphate. Its pathway is carbohydrate metabolism; tricarboxylic acid cycle; succinate from succinyl-CoA (ligase route): step 1/1. In terms of biological role, succinyl-CoA synthetase functions in the citric acid cycle (TCA), coupling the hydrolysis of succinyl-CoA to the synthesis of either ATP or GTP and thus represents the only step of substrate-level phosphorylation in the TCA. The beta subunit provides nucleotide specificity of the enzyme and binds the substrate succinate, while the binding sites for coenzyme A and phosphate are found in the alpha subunit. This chain is Succinate--CoA ligase [ADP-forming] subunit beta, found in Ehrlichia ruminantium (strain Welgevonden).